The sequence spans 283 residues: Bifunctional protein FolD (283 aa).

NADP(+) is bound by residues 164–166 (GSS), Ile189, and Ile230.

This sequence belongs to the tetrahydrofolate dehydrogenase/cyclohydrolase family. In terms of assembly, homodimer.

It carries out the reaction (6R)-5,10-methylene-5,6,7,8-tetrahydrofolate + NADP(+) = (6R)-5,10-methenyltetrahydrofolate + NADPH. It catalyses the reaction (6R)-5,10-methenyltetrahydrofolate + H2O = (6R)-10-formyltetrahydrofolate + H(+). It participates in one-carbon metabolism; tetrahydrofolate interconversion. Functionally, catalyzes the oxidation of 5,10-methylenetetrahydrofolate to 5,10-methenyltetrahydrofolate and then the hydrolysis of 5,10-methenyltetrahydrofolate to 10-formyltetrahydrofolate. The chain is Bifunctional protein FolD from Fusobacterium nucleatum subsp. nucleatum (strain ATCC 25586 / DSM 15643 / BCRC 10681 / CIP 101130 / JCM 8532 / KCTC 2640 / LMG 13131 / VPI 4355).